A 241-amino-acid chain; its full sequence is Homeobox protein TGIF2LX (241 aa).

Disordered regions lie at residues 1–58 and 126–209; these read MEAA…GNLP and TGKD…VSPE. Residues 21 to 39 show a composition bias toward polar residues; the sequence is AKTQSPAQDTSIMSRNNAD. Residues 48 to 111 constitute a DNA-binding region (homeobox; TALE-type); the sequence is EHKKKRKGNL…INARRRILPD (64 aa).

Belongs to the TALE/TGIF homeobox family.

The protein resides in the nucleus. Functionally, may have a transcription role in testis. The chain is Homeobox protein TGIF2LX (TGIF2LX) from Gorilla gorilla gorilla (Western lowland gorilla).